We begin with the raw amino-acid sequence, 148 residues long: Ergosterol biosynthetic protein 28 (148 aa).

Residues 1-25 (MFSLQDVITTTKTTLAAMPKGYLPK) are Cytoplasmic-facing. Residues 26-46 (WLLFISIVSVFNSIQTYVSGL) form a helical membrane-spanning segment. The Lumenal segment spans residues 47 to 92 (ELTRKVYERKPTETTHLSARTFGTWTFISCVIRFYGAMYLNEPHIF). A helical membrane pass occupies residues 93 to 113 (ELVFMSYMVALFHFGSELLIF). Topologically, residues 114–120 (RTCKLGK) are cytoplasmic. The helical transmembrane segment at 121–136 (GFMGPLVVSTTSLVWM) threads the bilayer. Residues 137-148 (YKQREYYTGVAW) are Lumenal-facing.

Belongs to the ERG28 family. Heterotetramer of ERG25, ERG26, ERG27 and ERG28. ERG28 acts as a scaffold to tether ERG27 and other 4,4-demethylation-related enzymes, forming a demethylation enzyme complex, in the endoplasmic reticulum. Interacts with ERG25, ERG26 and ERG27. Also interacts with ERG1, ERG3, ERG5, ERG6 and ERG11.

It localises to the endoplasmic reticulum membrane. In terms of biological role, part of the third module of ergosterol biosynthesis pathway that includes the late steps of the pathway. ERG28 has a role as a scaffold to help anchor the catalytic components of the C-4 demethylation complex ERG25, ERG26 and ERG27 to the endoplasmic reticulum. The third module or late pathway involves the ergosterol synthesis itself through consecutive reactions that mainly occur in the endoplasmic reticulum (ER) membrane. Firstly, the squalene synthase ERG9 catalyzes the condensation of 2 farnesyl pyrophosphate moieties to form squalene, which is the precursor of all steroids. Squalene synthase is crucial for balancing the incorporation of farnesyl diphosphate (FPP) into sterol and nonsterol isoprene synthesis. Secondly, the squalene epoxidase ERG1 catalyzes the stereospecific oxidation of squalene to (S)-2,3-epoxysqualene, which is considered to be a rate-limiting enzyme in steroid biosynthesis. Then, the lanosterol synthase ERG7 catalyzes the cyclization of (S)-2,3 oxidosqualene to lanosterol, a reaction that forms the sterol core. In the next steps, lanosterol is transformed to zymosterol through a complex process involving various demethylation, reduction and desaturation reactions. The lanosterol 14-alpha-demethylase ERG11 (also known as CYP51) catalyzes C14-demethylation of lanosterol to produce 4,4'-dimethyl cholesta-8,14,24-triene-3-beta-ol, which is critical for ergosterol biosynthesis. The C-14 reductase ERG24 reduces the C14=C15 double bond of 4,4-dimethyl-cholesta-8,14,24-trienol to produce 4,4-dimethyl-cholesta-8,24-dienol. 4,4-dimethyl-cholesta-8,24-dienol is substrate of the C-4 demethylation complex ERG25-ERG26-ERG27 in which ERG25 catalyzes the three-step monooxygenation required for the demethylation of 4,4-dimethyl and 4alpha-methylsterols, ERG26 catalyzes the oxidative decarboxylation that results in a reduction of the 3-beta-hydroxy group at the C-3 carbon to an oxo group, and ERG27 is responsible for the reduction of the keto group on the C-3. ERG28 has a role as a scaffold to help anchor ERG25, ERG26 and ERG27 to the endoplasmic reticulum and ERG29 regulates the activity of the iron-containing C4-methylsterol oxidase ERG25. Then, the sterol 24-C-methyltransferase ERG6 catalyzes the methyl transfer from S-adenosyl-methionine to the C-24 of zymosterol to form fecosterol. The C-8 sterol isomerase ERG2 catalyzes the reaction which results in unsaturation at C-7 in the B ring of sterols and thus converts fecosterol to episterol. The sterol-C5-desaturase ERG3 then catalyzes the introduction of a C-5 double bond in the B ring to produce 5-dehydroepisterol. The C-22 sterol desaturase ERG5 further converts 5-dehydroepisterol into ergosta-5,7,22,24(28)-tetraen-3beta-ol by forming the C-22(23) double bond in the sterol side chain. Finally, ergosta-5,7,22,24(28)-tetraen-3beta-ol is substrate of the C-24(28) sterol reductase ERG4 to produce ergosterol. This is Ergosterol biosynthetic protein 28 from Saccharomyces cerevisiae (strain ATCC 204508 / S288c) (Baker's yeast).